The following is an 88-amino-acid chain: DNA-directed RNA polymerase subunit omega (88 aa).

This sequence belongs to the RNA polymerase subunit omega family. The RNAP catalytic core consists of 2 alpha, 1 beta, 1 beta' and 1 omega subunit. When a sigma factor is associated with the core the holoenzyme is formed, which can initiate transcription.

The catalysed reaction is RNA(n) + a ribonucleoside 5'-triphosphate = RNA(n+1) + diphosphate. Functionally, promotes RNA polymerase assembly. Latches the N- and C-terminal regions of the beta' subunit thereby facilitating its interaction with the beta and alpha subunits. In Haemophilus influenzae (strain 86-028NP), this protein is DNA-directed RNA polymerase subunit omega.